The sequence spans 338 residues: RNA 3'-terminal phosphate cyclase (338 aa).

ATP contacts are provided by residues glutamine 103 and tyrosine 283 to glutamine 287. Catalysis depends on histidine 308, which acts as the Tele-AMP-histidine intermediate.

It belongs to the RNA 3'-terminal cyclase family. Type 1 subfamily.

It is found in the cytoplasm. The catalysed reaction is a 3'-end 3'-phospho-ribonucleotide-RNA + ATP = a 3'-end 2',3'-cyclophospho-ribonucleotide-RNA + AMP + diphosphate. Its function is as follows. Catalyzes the conversion of 3'-phosphate to a 2',3'-cyclic phosphodiester at the end of RNA. The mechanism of action of the enzyme occurs in 3 steps: (A) adenylation of the enzyme by ATP; (B) transfer of adenylate to an RNA-N3'P to produce RNA-N3'PP5'A; (C) and attack of the adjacent 2'-hydroxyl on the 3'-phosphorus in the diester linkage to produce the cyclic end product. The biological role of this enzyme is unknown but it is likely to function in some aspects of cellular RNA processing. In Shigella boydii serotype 4 (strain Sb227), this protein is RNA 3'-terminal phosphate cyclase.